A 299-amino-acid chain; its full sequence is Lipoyl synthase 2 (299 aa).

Positions 43, 48, 54, 69, 73, 76, and 294 each coordinate [4Fe-4S] cluster. The 229-residue stretch at 55 to 283 folds into the Radical SAM core domain; that stretch reads YAAGTATFLL…GAVARDLGFA (229 aa).

This sequence belongs to the radical SAM superfamily. Lipoyl synthase family. The cofactor is [4Fe-4S] cluster.

It is found in the cytoplasm. It carries out the reaction [[Fe-S] cluster scaffold protein carrying a second [4Fe-4S](2+) cluster] + N(6)-octanoyl-L-lysyl-[protein] + 2 oxidized [2Fe-2S]-[ferredoxin] + 2 S-adenosyl-L-methionine + 4 H(+) = [[Fe-S] cluster scaffold protein] + N(6)-[(R)-dihydrolipoyl]-L-lysyl-[protein] + 4 Fe(3+) + 2 hydrogen sulfide + 2 5'-deoxyadenosine + 2 L-methionine + 2 reduced [2Fe-2S]-[ferredoxin]. It participates in protein modification; protein lipoylation via endogenous pathway; protein N(6)-(lipoyl)lysine from octanoyl-[acyl-carrier-protein]: step 2/2. Its function is as follows. Catalyzes the radical-mediated insertion of two sulfur atoms into the C-6 and C-8 positions of the octanoyl moiety bound to the lipoyl domains of lipoate-dependent enzymes, thereby converting the octanoylated domains into lipoylated derivatives. The protein is Lipoyl synthase 2 of Parasynechococcus marenigrum (strain WH8102).